A 74-amino-acid polypeptide reads, in one-letter code: AELERLSEDDATAQALSYTHDASGVTHDSYQEGSRCSNCLLYSNPDAKDWGPCSVFPKHLVAEGGWCTAWVGRG.

Cys36, Cys39, Cys53, and Cys67 together coordinate [4Fe-4S] cluster.

Homodimer.

Specific class of high-redox-potential 4Fe-4S ferredoxins. Functions in anaerobic electron transport in most purple and in some other photosynthetic bacteria and in at least one genus (Paracoccus) of halophilic, denitrifying bacteria. The chain is High-potential iron-sulfur protein isozyme 2 from Ectothiorhodospira mobilis.